A 397-amino-acid chain; its full sequence is Argininosuccinate synthase (397 aa).

An ATP-binding site is contributed by 9 to 17 (AYSGGLDTS). Y86 contacts L-citrulline. Residue G116 coordinates ATP. Residues T118, N122, and D123 each coordinate L-aspartate. N122 lines the L-citrulline pocket. L-citrulline-binding residues include R126, S174, E259, and Y271.

The protein belongs to the argininosuccinate synthase family. Type 1 subfamily. As to quaternary structure, homotetramer.

Its subcellular location is the cytoplasm. The catalysed reaction is L-citrulline + L-aspartate + ATP = 2-(N(omega)-L-arginino)succinate + AMP + diphosphate + H(+). The protein operates within amino-acid biosynthesis; L-arginine biosynthesis; L-arginine from L-ornithine and carbamoyl phosphate: step 2/3. This is Argininosuccinate synthase from Lactococcus lactis subsp. cremoris (strain SK11).